An 89-amino-acid polypeptide reads, in one-letter code: Small ribosomal subunit protein uS15 (89 aa).

Belongs to the universal ribosomal protein uS15 family. In terms of assembly, part of the 30S ribosomal subunit. Forms a bridge to the 50S subunit in the 70S ribosome, contacting the 23S rRNA.

Functionally, one of the primary rRNA binding proteins, it binds directly to 16S rRNA where it helps nucleate assembly of the platform of the 30S subunit by binding and bridging several RNA helices of the 16S rRNA. Its function is as follows. Forms an intersubunit bridge (bridge B4) with the 23S rRNA of the 50S subunit in the ribosome. In Shewanella denitrificans (strain OS217 / ATCC BAA-1090 / DSM 15013), this protein is Small ribosomal subunit protein uS15.